Consider the following 601-residue polypeptide: Kelch repeat and BTB domain-containing protein 8 (601 aa).

A disordered region spans residues 1–25 (MAASADLSKSSPTPNGIPSSDPASD). The span at 7–22 (LSKSSPTPNGIPSSDP) shows a compositional bias: polar residues. Residues 49–117 (TDIVVEVDHG…AYTSRVILTE (69 aa)) form the BTB domain. A BACK domain is found at 153 to 252 (IGVFIFADHY…PLMEDTFIEK (100 aa)). Kelch repeat units lie at residues 336–390 (DIYI…YCCG), 391–441 (KMYA…EYKE), 443–481 (IYVL…VYKD), 483–532 (IYYI…LFQN), and 542–588 (QVTV…FECA).

This sequence belongs to the KBTBD8 family. Component of the BCR(KBTBD8) E3 ubiquitin ligase complex, at least composed of CUL3, KBTBD8 and RBX1.

It localises to the cytoplasm. Its subcellular location is the cytoskeleton. The protein resides in the spindle. The protein localises to the golgi apparatus. In terms of biological role, substrate-specific adapter of a BCR (BTB-CUL3-RBX1) E3 ubiquitin ligase complex that acts as a regulator of neural crest specification. The BCR(KBTBD8) complex acts by mediating monoubiquitination of NOLC1 and TCOF1: monoubiquitination promotes the formation of a NOLC1-TCOF1 complex that acts as a platform to connect RNA polymerase I with enzymes responsible for ribosomal processing and modification, leading to remodel the translational program of differentiating cells in favor of neural crest specification. The chain is Kelch repeat and BTB domain-containing protein 8 (KBTBD8) from Homo sapiens (Human).